The chain runs to 249 residues: Triosephosphate isomerase (249 aa).

9–11 (NWK) lines the substrate pocket. Catalysis depends on His-94, which acts as the Electrophile. Glu-166 serves as the catalytic Proton acceptor. Residues Gly-172 and 232–233 (GG) contribute to the substrate site.

The protein belongs to the triosephosphate isomerase family. As to quaternary structure, homodimer.

The protein localises to the cytoplasm. The enzyme catalyses D-glyceraldehyde 3-phosphate = dihydroxyacetone phosphate. It participates in carbohydrate biosynthesis; gluconeogenesis. Its pathway is carbohydrate degradation; glycolysis; D-glyceraldehyde 3-phosphate from glycerone phosphate: step 1/1. Involved in the gluconeogenesis. Catalyzes stereospecifically the conversion of dihydroxyacetone phosphate (DHAP) to D-glyceraldehyde-3-phosphate (G3P). The chain is Triosephosphate isomerase from Xylella fastidiosa (strain M23).